Reading from the N-terminus, the 189-residue chain is MKKYSKKDRQMKLQVAIEENPFITDEQLAEKFGVSVQTIRLDRVALSIPELRERIKHVASVNYADAVKSLPIDEVIGEIIDIQLSKSAISIFDVRSEHVFKRNKIARGHHLFAQANSLATAVIPNELALTTQATVRFVRSVNEGERIIAKAKVRPATDNRAITIVDVKSYVGDELVLKGKFEMYHATQK.

It belongs to the FapR family.

Transcriptional factor involved in regulation of membrane lipid biosynthesis by repressing genes involved in fatty acid and phospholipid metabolism. This chain is Transcription factor FapR, found in Listeria welshimeri serovar 6b (strain ATCC 35897 / DSM 20650 / CCUG 15529 / CIP 8149 / NCTC 11857 / SLCC 5334 / V8).